A 224-amino-acid polypeptide reads, in one-letter code: Probable 2-phosphosulfolactate phosphatase (224 aa).

This sequence belongs to the ComB family. Mg(2+) serves as cofactor.

It catalyses the reaction (2R)-O-phospho-3-sulfolactate + H2O = (2R)-3-sulfolactate + phosphate. The sequence is that of Probable 2-phosphosulfolactate phosphatase from Pseudothermotoga lettingae (strain ATCC BAA-301 / DSM 14385 / NBRC 107922 / TMO) (Thermotoga lettingae).